A 558-amino-acid chain; its full sequence is Hsp70-Hsp90 organizing protein 3 (558 aa).

TPR repeat units lie at residues 2–35 (AEEA…SPTN), 37–69 (ILYS…KPDW), 70–103 (SKGY…DPSN), and 136–173 (EKLT…YMKD). The STI1 1 domain maps to 131 to 170 (GKEMWEKLTADPGTRVYLEQDDFVKTMKEIQRNPNNLNLY). Positions 191–232 (SSGEDTEMKEADERKEPEPEMEPMELTEEERQKKERKEKALK) are disordered. Residues 196 to 208 (TEMKEADERKEPE) are compositionally biased toward basic and acidic residues. Positions 209–218 (PEMEPMELTE) are enriched in acidic residues. Positions 219 to 232 (EERQKKERKEKALK) are enriched in basic and acidic residues. The Bipartite nuclear localization signal motif lies at 227–244 (KEKALKEKGEGNVAYKKK). TPR repeat units lie at residues 230-263 (ALKE…DDED), 265-297 (SYLT…GREL), 305-342 (ARAL…HRNP), 369-402 (AEEE…NPND), 404-436 (RAYS…DPSF), and 437-470 (TKGY…DPKN). Positions 507-546 (DPEVQNILSDPVMRQVLVDFQENPKAAQEHMKNPMVMNKI) constitute an STI1 2 domain.

In terms of assembly, co-chaperone that forms a complex with HSP70 and HSP90 and preproteins (e.g. chloroplast preproteins). Post-translationally, phosphorylated. In terms of processing, acetylated.

Its subcellular location is the cytoplasm. The protein localises to the nucleus. Its function is as follows. Mediates the association of the molecular chaperones HSP70 and HSP90. Mediates nuclear encoded chloroplast preproteins binding to HSP90 prior to chloroplastic sorting. Involved in acclimation to heat. In Arabidopsis thaliana (Mouse-ear cress), this protein is Hsp70-Hsp90 organizing protein 3 (HOP3).